The sequence spans 170 residues: Lipoprotein signal peptidase (170 aa).

3 helical membrane-spanning segments follow: residues 13–33 (IFIS…VKYI), 72–92 (LFFL…ALKE), and 96–113 (IARI…GNII). Active-site residues include D124 and D146. The helical transmembrane segment at 142–162 (FNFADSYVVIGITLFIIYDLF) threads the bilayer.

This sequence belongs to the peptidase A8 family.

It localises to the cell inner membrane. It carries out the reaction Release of signal peptides from bacterial membrane prolipoproteins. Hydrolyzes -Xaa-Yaa-Zaa-|-(S,diacylglyceryl)Cys-, in which Xaa is hydrophobic (preferably Leu), and Yaa (Ala or Ser) and Zaa (Gly or Ala) have small, neutral side chains.. The protein operates within protein modification; lipoprotein biosynthesis (signal peptide cleavage). Its function is as follows. This protein specifically catalyzes the removal of signal peptides from prolipoproteins. The chain is Lipoprotein signal peptidase from Borrelia turicatae (strain 91E135).